The primary structure comprises 102 residues: Iron-sulfur cluster assembly protein CyaY (102 aa).

The protein belongs to the frataxin family.

Involved in iron-sulfur (Fe-S) cluster assembly. May act as a regulator of Fe-S biogenesis. The sequence is that of Iron-sulfur cluster assembly protein CyaY from Pasteurella multocida (strain Pm70).